An 82-amino-acid polypeptide reads, in one-letter code: MEQLPLPAPIHYELILQLLEKQTMNAVSQNSDLQHQVSQLIVTLRKAASQQKRLEENCQASAVTVDHRWSLNHHGGKVITPD.

This is an uncharacterized protein from Anabaena cylindrica.